The primary structure comprises 249 residues: Leucyl/phenylalanyl-tRNA--protein transferase (249 aa).

Positions 1–21 are disordered; it reads MSRTLPHLLSPDPASPFPPAE.

This sequence belongs to the L/F-transferase family.

Its subcellular location is the cytoplasm. The enzyme catalyses N-terminal L-lysyl-[protein] + L-leucyl-tRNA(Leu) = N-terminal L-leucyl-L-lysyl-[protein] + tRNA(Leu) + H(+). It carries out the reaction N-terminal L-arginyl-[protein] + L-leucyl-tRNA(Leu) = N-terminal L-leucyl-L-arginyl-[protein] + tRNA(Leu) + H(+). It catalyses the reaction L-phenylalanyl-tRNA(Phe) + an N-terminal L-alpha-aminoacyl-[protein] = an N-terminal L-phenylalanyl-L-alpha-aminoacyl-[protein] + tRNA(Phe). Its function is as follows. Functions in the N-end rule pathway of protein degradation where it conjugates Leu, Phe and, less efficiently, Met from aminoacyl-tRNAs to the N-termini of proteins containing an N-terminal arginine or lysine. The chain is Leucyl/phenylalanyl-tRNA--protein transferase from Xanthomonas campestris pv. campestris (strain B100).